The primary structure comprises 418 residues: Actin-like protein C08B11.6 (418 aa).

This sequence belongs to the actin family. ARP6 subfamily.

The protein resides in the cytoplasm. The protein localises to the cytoskeleton. This is Actin-like protein C08B11.6 (arp-6) from Caenorhabditis elegans.